Consider the following 366-residue polypeptide: Sulfate/thiosulfate import ATP-binding protein CysA 2 (366 aa).

The ABC transporter domain occupies 14–243 (LSVHALCRRF…PASRFVAEFV (230 aa)). Position 46–53 (46–53 (GPSGCGKT)) interacts with ATP.

It belongs to the ABC transporter superfamily. Sulfate/tungstate importer (TC 3.A.1.6) family. The complex is composed of two ATP-binding proteins (CysA), two transmembrane proteins (CysT and CysW) and a solute-binding protein (CysP).

Its subcellular location is the cell inner membrane. The enzyme catalyses sulfate(out) + ATP + H2O = sulfate(in) + ADP + phosphate + H(+). The catalysed reaction is thiosulfate(out) + ATP + H2O = thiosulfate(in) + ADP + phosphate + H(+). Its function is as follows. Part of the ABC transporter complex CysAWTP involved in sulfate/thiosulfate import. Responsible for energy coupling to the transport system. The polypeptide is Sulfate/thiosulfate import ATP-binding protein CysA 2 (Chromobacterium violaceum (strain ATCC 12472 / DSM 30191 / JCM 1249 / CCUG 213 / NBRC 12614 / NCIMB 9131 / NCTC 9757 / MK)).